The following is a 436-amino-acid chain: AP-2 complex subunit mu-B (436 aa).

Positions Arg-170–Arg-435 constitute an MHD domain. 3 residues coordinate a 1,2-diacyl-sn-glycero-3-phospho-(1D-myo-inositol-3,4,5-trisphosphate): Lys-342, Lys-346, and Lys-355.

Belongs to the adaptor complexes medium subunit family. As to quaternary structure, adaptor protein complex 2 (AP-2) is a heterotetramer composed of two large adaptins (alpha-type subunit and beta-type subunit), a medium adaptin (mu-type subunit) and a small adaptin (sigma-type subunit).

It is found in the cell membrane. The protein resides in the membrane. It localises to the coated pit. Functionally, component of the adaptor complexes which link clathrin to receptors in coated vesicles. Clathrin-associated protein complexes are believed to interact with the cytoplasmic tails of membrane proteins, leading to their selection and concentration. AP50 is a subunit of the plasma membrane adaptor. The complex binds polyphosphoinositide-containing lipids. The polypeptide is AP-2 complex subunit mu-B (ap2m1b) (Danio rerio (Zebrafish)).